Reading from the N-terminus, the 241-residue chain is ATP synthase subunit a (241 aa).

Transmembrane regions (helical) follow at residues 30 to 50 (GQVF…VLVG), 89 to 109 (LPFI…GALI), 128 to 148 (INTT…AGLS), 193 to 213 (LAVG…VMLL), and 214 to 234 (GLFT…FYIG).

It belongs to the ATPase A chain family. As to quaternary structure, F-type ATPases have 2 components, CF(1) - the catalytic core - and CF(0) - the membrane proton channel. CF(1) has five subunits: alpha(3), beta(3), gamma(1), delta(1), epsilon(1). CF(0) has four main subunits: a, b, b' and c.

Its subcellular location is the cellular thylakoid membrane. Functionally, key component of the proton channel; it plays a direct role in the translocation of protons across the membrane. The protein is ATP synthase subunit a of Synechococcus sp. (strain CC9902).